We begin with the raw amino-acid sequence, 482 residues long: tRNA sulfurtransferase (482 aa).

A THUMP domain is found at leucine 61–arginine 165. Residues leucine 183–isoleucine 184, lysine 265, glycine 287, and glutamine 296 each bind ATP. A disulfide bond links cysteine 344 and cysteine 456. Residues phenylalanine 404 to proline 482 enclose the Rhodanese domain. Cysteine 456 acts as the Cysteine persulfide intermediate in catalysis.

Belongs to the ThiI family.

It localises to the cytoplasm. It carries out the reaction [ThiI sulfur-carrier protein]-S-sulfanyl-L-cysteine + a uridine in tRNA + 2 reduced [2Fe-2S]-[ferredoxin] + ATP + H(+) = [ThiI sulfur-carrier protein]-L-cysteine + a 4-thiouridine in tRNA + 2 oxidized [2Fe-2S]-[ferredoxin] + AMP + diphosphate. It catalyses the reaction [ThiS sulfur-carrier protein]-C-terminal Gly-Gly-AMP + S-sulfanyl-L-cysteinyl-[cysteine desulfurase] + AH2 = [ThiS sulfur-carrier protein]-C-terminal-Gly-aminoethanethioate + L-cysteinyl-[cysteine desulfurase] + A + AMP + 2 H(+). Its pathway is cofactor biosynthesis; thiamine diphosphate biosynthesis. Functionally, catalyzes the ATP-dependent transfer of a sulfur to tRNA to produce 4-thiouridine in position 8 of tRNAs, which functions as a near-UV photosensor. Also catalyzes the transfer of sulfur to the sulfur carrier protein ThiS, forming ThiS-thiocarboxylate. This is a step in the synthesis of thiazole, in the thiamine biosynthesis pathway. The sulfur is donated as persulfide by IscS. The protein is tRNA sulfurtransferase of Escherichia coli O9:H4 (strain HS).